The following is a 415-amino-acid chain: Esterase FrsA (415 aa).

It belongs to the FrsA family.

It catalyses the reaction a carboxylic ester + H2O = an alcohol + a carboxylate + H(+). Functionally, catalyzes the hydrolysis of esters. The polypeptide is Esterase FrsA (Vibrio parahaemolyticus serotype O3:K6 (strain RIMD 2210633)).